A 305-amino-acid polypeptide reads, in one-letter code: N-acetylglucosamine-1-phosphotransferase subunit gamma (305 aa).

Residues 1-24 (MAAGLARLLLLLGLSAGGPAPAGA) form the signal peptide. An MRH domain is found at 69-171 (GKCFSLVEST…TFETPLVCHP (103 aa)). A disulfide bond links C71 and C84. N-linked (GlcNAc...) asparagine glycosylation is found at N88 and N115. 2 disulfides stabilise this stretch: C129/C157 and C142/C169. In terms of domain architecture, DMAP1-binding spans 176 to 279 (VYPTLPEALQ…YTRPTETSNL (104 aa)). Residues 267–305 (GIPYTRPTETSNLEHLGHETPRAKSPEQLRGDPGLRGSL) form a disordered region. Over residues 281-296 (HLGHETPRAKSPEQLR) the composition is skewed to basic and acidic residues.

As to quaternary structure, homodimer; disulfide-linked. Hexamer of two alpha (GNPTAB), two beta (GNPTAB) and two gamma (GNPTG) subunits; disulfide-linked. The alpha and/or the beta subunits of the enzyme constitute the catalytic subunits. Post-translationally, cys-245 mediates the formation of the interchain disulfide bond for formation of the homodimer. Cys-142, Cys-157 and Cys-169 are involved in intramolecular disulfide bonds formation. Widely expressed.

The protein resides in the secreted. The protein localises to the golgi apparatus. Non-catalytic subunit of the N-acetylglucosamine-1-phosphotransferase complex, an enzyme that catalyzes the formation of mannose 6-phosphate (M6P) markers on high mannose type oligosaccharides in the Golgi apparatus. Binds and presents the high mannose glycans of the acceptor to the catalytic alpha and beta subunits (GNPTAB). Enhances the rate of N-acetylglucosamine-1-phosphate transfer to the oligosaccharides of acid hydrolase acceptors. The sequence is that of N-acetylglucosamine-1-phosphotransferase subunit gamma (GNPTG) from Homo sapiens (Human).